The following is a 2422-amino-acid chain: Interferon-induced very large GTPase 1 (2422 aa).

A disordered region spans residues 945–965; that stretch reads ENFFEDSDSPTKSSSTEPSPH. A compositionally biased stretch (low complexity) spans 954 to 963; that stretch reads PTKSSSTEPS. In terms of domain architecture, VLIG-type G spans 1479-1720; the sequence is DKRLFVLSIL…KISDVKSRVQ (242 aa). Residues 1489–1496, 1542–1545, and 1619–1622 each bind GTP; these read GLQSSGKS, DTEG, and TATD.

Belongs to the TRAFAC class dynamin-like GTPase superfamily. Very large inducible GTPase (VLIG) family.

It localises to the cytoplasm. Its subcellular location is the cytosol. It is found in the nucleus. The polypeptide is Interferon-induced very large GTPase 1 (GVINP1) (Homo sapiens (Human)).